Reading from the N-terminus, the 698-residue chain is Probable Xaa-Pro aminopeptidase P (698 aa).

Asp-509, Asp-520, Glu-604, and Glu-618 together coordinate Mn(2+).

Belongs to the peptidase M24B family. The cofactor is Mn(2+).

It carries out the reaction Release of any N-terminal amino acid, including proline, that is linked to proline, even from a dipeptide or tripeptide.. Catalyzes the removal of a penultimate prolyl residue from the N-termini of peptides. In Trichophyton verrucosum (strain HKI 0517), this protein is Probable Xaa-Pro aminopeptidase P (AMPP).